We begin with the raw amino-acid sequence, 358 residues long: UPF0421 protein BT9727_2513 (358 aa).

4 consecutive transmembrane segments (helical) span residues 19–39, 74–94, 109–129, and 131–151; these read IAVF…IFAV, FTFF…FTIV, TLTA…AFLI, and LATT…ILPP.

Belongs to the UPF0421 family.

It is found in the cell membrane. This Bacillus thuringiensis subsp. konkukian (strain 97-27) protein is UPF0421 protein BT9727_2513.